Consider the following 300-residue polypeptide: Ribosomal protein L11 methyltransferase (300 aa).

Positions 144, 165, 187, and 235 each coordinate S-adenosyl-L-methionine.

The protein belongs to the methyltransferase superfamily. PrmA family.

It is found in the cytoplasm. It catalyses the reaction L-lysyl-[protein] + 3 S-adenosyl-L-methionine = N(6),N(6),N(6)-trimethyl-L-lysyl-[protein] + 3 S-adenosyl-L-homocysteine + 3 H(+). Methylates ribosomal protein L11. The protein is Ribosomal protein L11 methyltransferase of Prochlorococcus marinus (strain MIT 9515).